The sequence spans 127 residues: UPF0102 protein Reut_A3265 (127 aa).

This sequence belongs to the UPF0102 family.

The polypeptide is UPF0102 protein Reut_A3265 (Cupriavidus pinatubonensis (strain JMP 134 / LMG 1197) (Cupriavidus necator (strain JMP 134))).